A 258-amino-acid polypeptide reads, in one-letter code: Ubiquinone/menaquinone biosynthesis C-methyltransferase UbiE (258 aa).

Residues T83, D104, and 130 to 131 (DA) each bind S-adenosyl-L-methionine.

The protein belongs to the class I-like SAM-binding methyltransferase superfamily. MenG/UbiE family.

The enzyme catalyses a 2-demethylmenaquinol + S-adenosyl-L-methionine = a menaquinol + S-adenosyl-L-homocysteine + H(+). It catalyses the reaction a 2-methoxy-6-(all-trans-polyprenyl)benzene-1,4-diol + S-adenosyl-L-methionine = a 5-methoxy-2-methyl-3-(all-trans-polyprenyl)benzene-1,4-diol + S-adenosyl-L-homocysteine + H(+). The protein operates within quinol/quinone metabolism; menaquinone biosynthesis; menaquinol from 1,4-dihydroxy-2-naphthoate: step 2/2. It functions in the pathway cofactor biosynthesis; ubiquinone biosynthesis. Methyltransferase required for the conversion of demethylmenaquinol (DMKH2) to menaquinol (MKH2) and the conversion of 2-polyprenyl-6-methoxy-1,4-benzoquinol (DDMQH2) to 2-polyprenyl-3-methyl-6-methoxy-1,4-benzoquinol (DMQH2). This Bordetella bronchiseptica (strain ATCC BAA-588 / NCTC 13252 / RB50) (Alcaligenes bronchisepticus) protein is Ubiquinone/menaquinone biosynthesis C-methyltransferase UbiE.